Reading from the N-terminus, the 267-residue chain is MQRIAIPASANAPLTTTPVKIAIRNLEFYYGTFQALKQINLEIPEKRVTALIGPSGCGKSTLLRIFNRIYALYPKLEARGEVLLDGENILSPKYSINRLRSKVGMVFQKPVPFPMTIYENVAYGIRHHEVMSKSQMNDRVEQALQQSALWEEVKDKLNQNALGLSGGQQQRLCIARAIALTPSVLLLDEPTSALDPISTSRIEQLIEELKTKYTIVIVTHNMQQAARVSDYTGFMYLGDLIEHDRTETIFSQPSKQQTEDYITGRFG.

In terms of domain architecture, ABC transporter spans isoleucine 21–isoleucine 262. Glycine 53–serine 60 serves as a coordination point for ATP.

It belongs to the ABC transporter superfamily. Phosphate importer (TC 3.A.1.7) family. As to quaternary structure, the complex is composed of two ATP-binding proteins (PstB), two transmembrane proteins (PstC and PstA) and a solute-binding protein (PstS).

It localises to the cell inner membrane. The catalysed reaction is phosphate(out) + ATP + H2O = ADP + 2 phosphate(in) + H(+). In terms of biological role, part of the ABC transporter complex PstSACB involved in phosphate import. Responsible for energy coupling to the transport system. The sequence is that of Phosphate import ATP-binding protein PstB from Xylella fastidiosa (strain 9a5c).